The chain runs to 159 residues: 2-C-methyl-D-erythritol 2,4-cyclodiphosphate synthase (159 aa).

Residues aspartate 10 and histidine 12 each contribute to the a divalent metal cation site. Residues 10 to 12 (DVH) and 36 to 37 (HS) contribute to the 4-CDP-2-C-methyl-D-erythritol 2-phosphate site. Histidine 44 serves as a coordination point for a divalent metal cation. 4-CDP-2-C-methyl-D-erythritol 2-phosphate is bound by residues 58-60 (DIG), 63-67 (FPDTD), 102-108 (AQVPKMA), 134-137 (TTTE), phenylalanine 141, and arginine 144.

Belongs to the IspF family. As to quaternary structure, homotrimer. It depends on a divalent metal cation as a cofactor.

The catalysed reaction is 4-CDP-2-C-methyl-D-erythritol 2-phosphate = 2-C-methyl-D-erythritol 2,4-cyclic diphosphate + CMP. It functions in the pathway isoprenoid biosynthesis; isopentenyl diphosphate biosynthesis via DXP pathway; isopentenyl diphosphate from 1-deoxy-D-xylulose 5-phosphate: step 4/6. In terms of biological role, involved in the biosynthesis of isopentenyl diphosphate (IPP) and dimethylallyl diphosphate (DMAPP), two major building blocks of isoprenoid compounds. Catalyzes the conversion of 4-diphosphocytidyl-2-C-methyl-D-erythritol 2-phosphate (CDP-ME2P) to 2-C-methyl-D-erythritol 2,4-cyclodiphosphate (ME-CPP) with a corresponding release of cytidine 5-monophosphate (CMP). This Shewanella woodyi (strain ATCC 51908 / MS32) protein is 2-C-methyl-D-erythritol 2,4-cyclodiphosphate synthase.